We begin with the raw amino-acid sequence, 147 residues long: Hemoglobin subunit gamma (147 aa).

In terms of domain architecture, Globin spans 3 to 147 (NFTAEDKAAI…VASALASRYH (145 aa)). The heme b site is built by His64 and His93.

The protein belongs to the globin family. In terms of assembly, heterotetramer of two alpha chains and two gamma chains in fetal hemoglobin (Hb F). Red blood cells.

In terms of biological role, gamma chains make up the fetal hemoglobin F, in combination with alpha chains. In Callithrix jacchus (White-tufted-ear marmoset), this protein is Hemoglobin subunit gamma (HBG1).